The sequence spans 296 residues: Ribosomal RNA small subunit methyltransferase A (296 aa).

Asparagine 30, leucine 32, glycine 57, glutamate 78, aspartate 103, and asparagine 128 together coordinate S-adenosyl-L-methionine.

It belongs to the class I-like SAM-binding methyltransferase superfamily. rRNA adenine N(6)-methyltransferase family. RsmA subfamily.

It localises to the cytoplasm. It catalyses the reaction adenosine(1518)/adenosine(1519) in 16S rRNA + 4 S-adenosyl-L-methionine = N(6)-dimethyladenosine(1518)/N(6)-dimethyladenosine(1519) in 16S rRNA + 4 S-adenosyl-L-homocysteine + 4 H(+). Functionally, specifically dimethylates two adjacent adenosines (A1518 and A1519) in the loop of a conserved hairpin near the 3'-end of 16S rRNA in the 30S particle. May play a critical role in biogenesis of 30S subunits. The protein is Ribosomal RNA small subunit methyltransferase A of Staphylococcus haemolyticus (strain JCSC1435).